We begin with the raw amino-acid sequence, 248 residues long: Oligo(A)/oligo(T)-binding protein (248 aa).

The DNA-binding element occupies 1 to 36; the sequence is MAKTLAQGRKPGSGRKPGKGKTLREGRKPGSGRRRR. Disordered regions lie at residues 1 to 127 and 219 to 248; these read MAKT…LQQQ and TAAS…NATI. Repeat copies occupy residues 8 to 12, 14 to 18, and 26 to 30. The 3 X 5 AA repeats of G-R-K-P-G stretch occupies residues 8-30; it reads GRKPGSGRKPGKGKTLREGRKPG. Basic residues predominate over residues 12–21; the sequence is GSGRKPGKGK. Residues 37 to 71 show a composition bias toward basic and acidic residues; the sequence is QDTGGKETDGSQQDQESRLISSRDMEAVDALRELT. 2 stretches are compositionally biased toward low complexity: residues 72 to 100 and 111 to 127; these read HSPS…LPPS and QQQQ…LQQQ.

Binds as a dimer or higher oligomer.

Its function is as follows. DNA-binding protein that recognizes oligo(A).oligo(T) tracts (A.T DNA). Can bind to any 11 bp sequence in which 10 bases conform to an uninterrupted oligo(A).oligo(T) tract. This chain is Oligo(A)/oligo(T)-binding protein (DAT1), found in Saccharomyces cerevisiae (strain ATCC 204508 / S288c) (Baker's yeast).